A 166-amino-acid chain; its full sequence is MEVILKRDFISLGYEGDICKVKDGYARNYLIPRNIAVVKNAANLRTLAQMQKSLEKKRAKRKMEAEILKGKIVDITVVIPMKVAENGKLYGSVSQQTIVDALKEKEIDINKRDVHMEKHIKELGDFEVEIKLYHSVNANIKIKVVNVDENAAAEEVKEENTAAVEA.

The protein belongs to the bacterial ribosomal protein bL9 family.

Its function is as follows. Binds to the 23S rRNA. This is Large ribosomal subunit protein bL9 from Brachyspira hyodysenteriae (strain ATCC 49526 / WA1).